Reading from the N-terminus, the 333-residue chain is Ornithine carbamoyltransferase (333 aa).

Residues 56–59, R107, and 134–137 contribute to the carbamoyl phosphate site; these read STRT and HPTQ. Residues N167, D231, and 235 to 236 each bind L-ornithine; that span reads SM. Residues 273 to 274 and R318 each bind carbamoyl phosphate; that span reads CL.

Belongs to the aspartate/ornithine carbamoyltransferase superfamily. OTCase family.

It localises to the cytoplasm. The catalysed reaction is carbamoyl phosphate + L-ornithine = L-citrulline + phosphate + H(+). The protein operates within amino-acid degradation; L-arginine degradation via ADI pathway; carbamoyl phosphate from L-arginine: step 2/2. Its function is as follows. Reversibly catalyzes the transfer of the carbamoyl group from carbamoyl phosphate (CP) to the N(epsilon) atom of ornithine (ORN) to produce L-citrulline. The protein is Ornithine carbamoyltransferase of Clostridium botulinum (strain Langeland / NCTC 10281 / Type F).